The chain runs to 81 residues: Photosystem I iron-sulfur center (81 aa).

4Fe-4S ferredoxin-type domains follow at residues 2 to 31 and 39 to 68; these read SHAVKIYDTCIGCTQCVRACPLDVLEMVPW and IASSPRTEDCVGCKRCETACPTDFLSIRVY. [4Fe-4S] cluster contacts are provided by Cys-11, Cys-14, Cys-17, Cys-21, Cys-48, Cys-51, Cys-54, and Cys-58.

As to quaternary structure, the cyanobacterial PSI reaction center is composed of one copy each of PsaA,B,C,D,E,F,I,J,K,L,M and X, and forms trimeric complexes. [4Fe-4S] cluster serves as cofactor.

It is found in the cellular thylakoid membrane. The enzyme catalyses reduced [plastocyanin] + hnu + oxidized [2Fe-2S]-[ferredoxin] = oxidized [plastocyanin] + reduced [2Fe-2S]-[ferredoxin]. In terms of biological role, apoprotein for the two 4Fe-4S centers FA and FB of photosystem I (PSI); essential for photochemical activity. FB is the terminal electron acceptor of PSI, donating electrons to ferredoxin. The C-terminus interacts with PsaA/B/D and helps assemble the protein into the PSI complex. Required for binding of PsaD and PsaE to PSI. PSI is a plastocyanin/cytochrome c6-ferredoxin oxidoreductase, converting photonic excitation into a charge separation, which transfers an electron from the donor P700 chlorophyll pair to the spectroscopically characterized acceptors A0, A1, FX, FA and FB in turn. The protein is Photosystem I iron-sulfur center of Prochlorococcus marinus (strain NATL2A).